A 275-amino-acid polypeptide reads, in one-letter code: NH(3)-dependent NAD(+) synthetase (275 aa).

46–53 (GISGGQDS) serves as a coordination point for ATP. Asp-52 lines the Mg(2+) pocket. A deamido-NAD(+)-binding site is contributed by Arg-140. ATP is bound at residue Thr-160. Mg(2+) is bound at residue Glu-165. Deamido-NAD(+) is bound by residues Lys-173 and Asp-180. Residues Lys-189 and Thr-211 each coordinate ATP. 260 to 261 (HK) is a binding site for deamido-NAD(+).

The protein belongs to the NAD synthetase family. Homodimer.

It carries out the reaction deamido-NAD(+) + NH4(+) + ATP = AMP + diphosphate + NAD(+) + H(+). It participates in cofactor biosynthesis; NAD(+) biosynthesis; NAD(+) from deamido-NAD(+) (ammonia route): step 1/1. In terms of biological role, catalyzes the ATP-dependent amidation of deamido-NAD to form NAD. Uses ammonia as a nitrogen source. The protein is NH(3)-dependent NAD(+) synthetase of Escherichia coli O6:K15:H31 (strain 536 / UPEC).